The following is a 428-amino-acid chain: Trigger factor (428 aa).

One can recognise a PPIase FKBP-type domain in the interval 163-248 (GDMVIIDYKG…IHEIKEKEVP (86 aa)).

Belongs to the FKBP-type PPIase family. Tig subfamily.

It localises to the cytoplasm. The catalysed reaction is [protein]-peptidylproline (omega=180) = [protein]-peptidylproline (omega=0). Involved in protein export. Acts as a chaperone by maintaining the newly synthesized protein in an open conformation. Functions as a peptidyl-prolyl cis-trans isomerase. The protein is Trigger factor of Alkaliphilus oremlandii (strain OhILAs) (Clostridium oremlandii (strain OhILAs)).